The primary structure comprises 236 residues: Syntaxin-8 (236 aa).

Residues 1–215 (MAPDPWFSTY…LVDRKSASCG (215 aa)) lie on the Cytoplasmic side of the membrane. The stretch at 42 to 65 (LTIRTLLKNLKVKIDLLKDLLLRA) forms a coiled coil. Residues Ser102 and Ser160 each carry the phosphoserine modification. The 63-residue stretch at 145 to 207 (QKIIQEQDAG…RTEARRVTLV (63 aa)) folds into the t-SNARE coiled-coil homology domain. A helical; Anchor for type IV membrane protein membrane pass occupies residues 216–232 (MIMVILLLLVAIVVVAV). Over 233-236 (WPTN) the chain is Vesicular.

This sequence belongs to the syntaxin family. In terms of assembly, part of the SNARE core complex containing STX7, VAMP8 and VTI1B. Interacts with VAMP8. Forms a SNARE complex with STX7, VTI1B and VAMP8 which functions in the homotypic fusion of late endosomes. Component of the SNARE complex composed of STX7, STX8, VAMP7 and VTI1B that is required for heterotypic fusion of late endosomes with lysosomes. Interacts with HECTD3. Interacts with TPC1. Ubiquitinated by HECTD3. As to expression, widely expressed in all tissues examined.

Its subcellular location is the membrane. Vesicle trafficking protein that functions in the early secretory pathway, possibly by mediating retrograde transport from cis-Golgi membranes to the ER. In Rattus norvegicus (Rat), this protein is Syntaxin-8 (Stx8).